The primary structure comprises 376 residues: Heme-dependent oxidative N-demethylase gamma subunit (376 aa).

As to quaternary structure, the heme-dependent oxidative N-demethylase (HODM) is a heterotetramer composed of a catalytic alpha subunit, a FMN/2Fe-2S-dependent oxidoreductase beta subunit, a gamma subunit with putative aminotransferase activity, and a delta subunit of unknown function.

In terms of biological role, component of the heme-dependent oxidative N-demethylase (HODM) enzyme, that catalyzes the NADPH-dependent oxidation of dimethylamine (DMA) to methylamine (MA) and formaldehyde. Functions in bacterial methylated amine catabolism, linking alkylamine oxidation to the tetrahydrofolate C1 pool. The gamma subunit of HODM may act as an aminomethyltransferase involved in the detoxification of formaldehyde released by the alpha subunit; this process requires tetrahydrofolate (THF). The chain is Heme-dependent oxidative N-demethylase gamma subunit from Ectopseudomonas mendocina (strain ymp) (Pseudomonas mendocina).